A 226-amino-acid polypeptide reads, in one-letter code: V-type proton ATPase subunit E 2 (226 aa).

Belongs to the V-ATPase E subunit family. In terms of assembly, V-ATPase is a heteromultimeric enzyme made up of two complexes: the ATP-hydrolytic V1 complex and the proton translocation V0 complex. The V1 complex consists of three catalytic AB heterodimers that form a heterohexamer, three peripheral stalks each consisting of EG heterodimers, one central rotor including subunits D and F, and the regulatory subunits C and H. The proton translocation complex V0 consists of the proton transport subunit a, a ring of proteolipid subunits c9c'', rotary subunit d, subunits e and f, and the accessory subunits ATP6AP1/Ac45 and ATP6AP2/PRR. Testis specific.

Its function is as follows. Subunit of the V1 complex of vacuolar(H+)-ATPase (V-ATPase), a multisubunit enzyme composed of a peripheral complex (V1) that hydrolyzes ATP and a membrane integral complex (V0) that translocates protons. V-ATPase is responsible for acidifying and maintaining the pH of intracellular compartments and in some cell types, is targeted to the plasma membrane, where it is responsible for acidifying the extracellular environment. The sequence is that of V-type proton ATPase subunit E 2 (ATP6V1E2) from Homo sapiens (Human).